The sequence spans 526 residues: Rho guanine nucleotide exchange factor 3 (526 aa).

The disordered stretch occupies residues 20–40 (ELPPASGPAKDAEEPSNKRVK). Residues S47 and S70 each carry the phosphoserine modification. The region spanning 122 to 304 (KRQEAIFELS…QGIVAEINTK (183 aa)) is the DH domain. Residues 291 to 449 (INIIQGIVAE…WLNCIRQAKE (159 aa)) form the PH domain. A disordered region spans residues 464 to 526 (EGSFLNPTTG…GNSRHGESNV (63 aa)). Residues 466–475 (SFLNPTTGSR) show a composition bias toward polar residues.

In terms of assembly, interacts with RHOA and RHOB.

Its subcellular location is the cytoplasm. Functionally, acts as a guanine nucleotide exchange factor (GEF) for RhoA and RhoB GTPases. The sequence is that of Rho guanine nucleotide exchange factor 3 (ARHGEF3) from Pongo abelii (Sumatran orangutan).